Here is a 152-residue protein sequence, read N- to C-terminus: Aspartate carbamoyltransferase regulatory chain (152 aa).

Residues Cys-108, Cys-113, Cys-137, and Cys-140 each coordinate Zn(2+).

Belongs to the PyrI family. Contains catalytic and regulatory chains. Zn(2+) serves as cofactor.

Functionally, involved in allosteric regulation of aspartate carbamoyltransferase. The chain is Aspartate carbamoyltransferase regulatory chain from Neisseria gonorrhoeae (strain ATCC 700825 / FA 1090).